Here is a 367-residue protein sequence, read N- to C-terminus: Methylated-thiol--coenzyme M methyltransferase (367 aa).

Zn(2+)-binding residues include His-236, Cys-238, and Cys-313.

This sequence belongs to the uroporphyrinogen decarboxylase family. In terms of assembly, homodimer. Requires Zn(2+) as cofactor.

The enzyme catalyses methanethiol + coenzyme M = methyl-coenzyme M + hydrogen sulfide + H(+). Methyltransferase involved in methanogenesis from methylated-thiols. Catalyzes two successive steps: mediates the transfer of a methyl group from the substrate to the cobalt cofactor of a methylated-thiol-specific corrinoid protein (MtsB), and the subsequent transfer of the methyl group from the corrinoid protein to coenzyme M. The polypeptide is Methylated-thiol--coenzyme M methyltransferase (mtsA) (Methanosarcina mazei (strain ATCC BAA-159 / DSM 3647 / Goe1 / Go1 / JCM 11833 / OCM 88) (Methanosarcina frisia)).